Here is a 317-residue protein sequence, read N- to C-terminus: L-lactate dehydrogenase (317 aa).

NAD(+)-binding positions include V16, D37, R42, Y67, and G81 to A82. Substrate is bound by residues Q84 and R90. NAD(+) contacts are provided by residues S103, A120–N122, and S145. N122–D125 serves as a coordination point for substrate. D150 to R153 is a binding site for substrate. The active-site Proton acceptor is the H177. Position 221 is a phosphotyrosine (Y221). Residue T230 coordinates substrate.

This sequence belongs to the LDH/MDH superfamily. LDH family. In terms of assembly, homotetramer.

Its subcellular location is the cytoplasm. The catalysed reaction is (S)-lactate + NAD(+) = pyruvate + NADH + H(+). It functions in the pathway fermentation; pyruvate fermentation to lactate; (S)-lactate from pyruvate: step 1/1. Functionally, catalyzes the conversion of lactate to pyruvate. This chain is L-lactate dehydrogenase, found in Limosilactobacillus fermentum (strain NBRC 3956 / LMG 18251) (Lactobacillus fermentum).